A 510-amino-acid chain; its full sequence is GMP synthase [glutamine-hydrolyzing] (510 aa).

The 191-residue stretch at 5 to 195 (LVIVVDFGGQ…LYEICKADGD (191 aa)) folds into the Glutamine amidotransferase type-1 domain. C82 acts as the Nucleophile in catalysis. Residues H169 and E171 contribute to the active site. The 190-residue stretch at 196–385 (WTMENFLEEQ…LEMPEYLVYR (190 aa)) folds into the GMPS ATP-PPase domain. 223-229 (SGGVDSS) serves as a coordination point for ATP.

Homodimer.

The catalysed reaction is XMP + L-glutamine + ATP + H2O = GMP + L-glutamate + AMP + diphosphate + 2 H(+). It participates in purine metabolism; GMP biosynthesis; GMP from XMP (L-Gln route): step 1/1. In terms of biological role, catalyzes the synthesis of GMP from XMP. The chain is GMP synthase [glutamine-hydrolyzing] from Finegoldia magna (strain ATCC 29328 / DSM 20472 / WAL 2508) (Peptostreptococcus magnus).